The following is a 116-amino-acid chain: Large ribosomal subunit protein bL19 (116 aa).

It belongs to the bacterial ribosomal protein bL19 family.

This protein is located at the 30S-50S ribosomal subunit interface and may play a role in the structure and function of the aminoacyl-tRNA binding site. The chain is Large ribosomal subunit protein bL19 from Staphylococcus aureus (strain Mu3 / ATCC 700698).